We begin with the raw amino-acid sequence, 122 residues long: Large ribosomal subunit protein uL18 (122 aa).

Residues 1–19 (MTKLSRKLQTQKRHRRLRR) show a composition bias toward basic residues. Positions 1–21 (MTKLSRKLQTQKRHRRLRRSV) are disordered.

The protein belongs to the universal ribosomal protein uL18 family. As to quaternary structure, part of the 50S ribosomal subunit; part of the 5S rRNA/L5/L18/L25 subcomplex. Contacts the 5S and 23S rRNAs.

Its function is as follows. This is one of the proteins that bind and probably mediate the attachment of the 5S RNA into the large ribosomal subunit, where it forms part of the central protuberance. This is Large ribosomal subunit protein uL18 from Prochlorococcus marinus (strain MIT 9312).